The chain runs to 387 residues: Trichocyst matrix protein T2-C (387 aa).

A signal peptide spans 1 to 19 (MKTIILALALIVLASSTQA). The propeptide occupies 20 to 48 (DVIATIKKIDQSPFGRTLFDTIWLELQTG). Residues 51–163 (LDRLLQTLTD…KVLEHQEATA (113 aa)) are a coiled coil. The propeptide occupies 184–239 (KGKATKQPAHKFTKEVASMIQKHFTTSAKKAAKFQHRKGYSKLFKAFATIASKVEQ). Residues 294-333 (TALANAQSDLAALNDVIAQVEASLDTTNQRIENVSADRND) are a coiled coil.

It belongs to the TMP family. In terms of processing, two components are produced by post-translational processing from the precursor peptide.

Its subcellular location is the trichocyst. Functionally, structural protein that crystallize inside the trichocyst matrix. In Paramecium tetraurelia, this protein is Trichocyst matrix protein T2-C (T2C).